Consider the following 539-residue polypeptide: Chaperonin GroEL (539 aa).

Residues 29–32 (TIGP), 86–90 (DGTTT), G413, 476–478 (NAA), and D492 each bind ATP.

It belongs to the chaperonin (HSP60) family. Forms a cylinder of 14 subunits composed of two heptameric rings stacked back-to-back. Interacts with the co-chaperonin GroES.

The protein resides in the cytoplasm. The catalysed reaction is ATP + H2O + a folded polypeptide = ADP + phosphate + an unfolded polypeptide.. Its function is as follows. Together with its co-chaperonin GroES, plays an essential role in assisting protein folding. The GroEL-GroES system forms a nano-cage that allows encapsulation of the non-native substrate proteins and provides a physical environment optimized to promote and accelerate protein folding. This Leuconostoc mesenteroides subsp. mesenteroides (strain ATCC 8293 / DSM 20343 / BCRC 11652 / CCM 1803 / JCM 6124 / NCDO 523 / NBRC 100496 / NCIMB 8023 / NCTC 12954 / NRRL B-1118 / 37Y) protein is Chaperonin GroEL.